We begin with the raw amino-acid sequence, 72 residues long: Crustacean hyperglycemic hormone (72 aa).

Gln1 is subject to Pyrrolidone carboxylic acid; partial. 3 disulfides stabilise this stretch: Cys7–Cys43, Cys23–Cys39, and Cys26–Cys52. Valine amide is present on Val72.

It belongs to the arthropod CHH/MIH/GIH/VIH hormone family. In terms of processing, the N-terminus forms pyrrolidone carboxylic acid in isoform CHH-II and is free in isoform CHH-I. Produced by the medulla terminalis X-organ in the eyestalks and transported to the sinus gland where they are stored and released.

Its subcellular location is the secreted. Its function is as follows. Hormone found in the sinus gland of isopods and decapods which controls the blood sugar level. Has a secretagogue action over the amylase released from the midgut gland. May act as a stress hormone and may be involved in the control of molting and reproduction. The protein is Crustacean hyperglycemic hormone of Cancer pagurus (Rock crab).